Reading from the N-terminus, the 380-residue chain is GDP-mannose:cellobiosyl-diphosphopolyprenol alpha-mannosyltransferase (380 aa).

It belongs to the glycosyltransferase group 1 family. Glycosyltransferase 4 subfamily.

It catalyses the reaction beta-D-Glc-(1-&gt;4)-alpha-D-Glc-di-trans,octa-cis-undecaprenyl diphosphate + GDP-alpha-D-mannose = alpha-D-Man-(1-&gt;3)-beta-D-Glc-(1-&gt;4)-alpha-D-Glc-1-di-trans,octa-cis-undecaprenyl diphosphate + GDP + H(+). In terms of biological role, involved in the biosynthesis of the exopolysaccharide xanthan, a polymer that is comprised of repeating pentasaccharide units with the structure of a beta-(1,4)-linked D-glucose backbone with trisaccharide side chains composed of mannose-beta-(1,4)-glucuronic acid-beta-(1,2)-mannose attached to alternate glucose residues in the backbone by alpha-(1,3) linkages. Xanthan is involved in pathogenicity but has also been used in a variety of applications as a specialty polymer for commercial applications, including food additives, where they act as viscosifying, stabilizing, emulsifying, or gelling agents. The sequence is that of GDP-mannose:cellobiosyl-diphosphopolyprenol alpha-mannosyltransferase (gumH) from Xanthomonas campestris.